The chain runs to 718 residues: Pullulanase (718 aa).

Asp406 (nucleophile) is an active-site residue. Glu435 serves as the catalytic Proton donor.

It belongs to the glycosyl hydrolase 13 family.

It carries out the reaction Hydrolysis of (1-&gt;6)-alpha-D-glucosidic linkages in pullulan, amylopectin and glycogen, and in the alpha- and beta-limit dextrins of amylopectin and glycogen.. In Bacillus subtilis (strain 168), this protein is Pullulanase (amyX).